We begin with the raw amino-acid sequence, 1172 residues long: MLWALALLALGIGPRASAGDHVKDTSFDLFSISNINRKTIGAKQFRGPDPGVPAYRFVRFDYIPPVNTDDLNRIVKLARRKEGFFLTAQLKQDRKSRGTLLVLEGPGTSQRQFEIVSNGPGDTLDLNYWVEGNQHTNFLEDVGLADSQWKNVTVQVASDTYSLYVGCDLIDSVTLEEPFYEQLEVDRSRMYVAKGASRESHFRGLLQNVHLVFADSVEDILSKKGCQHSQGAEVNTISEHTETLHLSPHITTDLVVQGVEKAQEVCTHSCEELSNMMNELSGLHVMVNQLSKNLERVSSDNQFLLELIGGPLKTRNMSACVQEGRIFAENETWVVDSCTTCTCKKFKTVCHQITCSPATCANPSFVEGECCPSCSHSADSDEGWSPWAEWTECSVTCGSGTQQRGRSCDVTSNTCLGPSIQTRTCSLGKCDTRIRQNGGWSHWSPWSSCSVTCGVGNVTRIRLCNSPVPQMGGKNCKGSGRETKPCQRDPCPIDGRWSPWSPWSACTVTCAGGIRERSRVCNSPEPQYGGKDCVGDVTEHQMCNKRSCPIDGCLSNPCFPGAKCNSFPDGSWSCGSCPVGFLGNGTHCEDLDECAVVTDICFSTNKAPRCVNTNPGFHCLPCPPRYKGNQPFGVGLEDARTEKQVCEPENPCKDKTHSCHKNAECIYLGHFSDPMYKCECQIGYAGDGLICGEDSDLDGWPNNNLVCATNATYHCIKDNCPKLPNSGQEDFDKDGIGDACDEDDDNDGVSDEKDNCQLLFNPRQLDYDKDEVGDRCDNCPYVHNPAQIDTDNNGEGDACSVDIDGDDVFNERDNCPYVYNTDQRDTDGDGVGDHCDNCPLMHNPDQIDQDNDLVGDQCDNNEDIDDDGHQNNQDNCPYISNSNQADHDNDGKGDACDSDDDNDGVPDDRDNCRLVFNPDQEDSDGDGRGDICKDDFDNDNVPDIDDVCPENNAITETDFRNFQMVPLDPKGTTQIDPNWVIRHQGKELVQTANSDPGIAVGFDEFGSVDFSGTFYVNTDRDDDYAGFVFGYQSSSRFYVVMWKQVTQTYWEDKPSRAYGYSGVSLKVVNSTTGTGEHLRNALWHTGNTEGQVRTLWHDPKNIGWKDYTAYRWHLIHRPKTGYMRVLVHEGKQVMADSGPIYDQTYAGGRLGLFVFSQEMVYFSDLKYECRDA.

Residues 1-18 (MLWALALLALGIGPRASA) form the signal peptide. In terms of domain architecture, Laminin G-like spans 19–215 (GDHVKDTSFD…LQNVHLVFAD (197 aa)). The segment at 19 to 232 (GDHVKDTSFD…KKGCQHSQGA (214 aa)) is heparin-binding. 3 N-linked (GlcNAc...) asparagine glycosylation sites follow: asparagine 151, asparagine 316, and asparagine 330. One can recognise a VWFC domain in the interval 318-375 (SACVQEGRIFAENETWVVDSCTTCTCKKFKTVCHQITCSPATCANPSFVEGECCPSCS). TSP type-1 domains are found at residues 381-431 (DEGW…GKCD), 437-492 (NGGW…DPCP), and 494-549 (DGRW…RSCP). 27 cysteine pairs are disulfide-bonded: cysteine 393/cysteine 425, cysteine 397/cysteine 430, cysteine 408/cysteine 415, cysteine 449/cysteine 486, cysteine 453/cysteine 491, cysteine 464/cysteine 476, cysteine 506/cysteine 543, cysteine 510/cysteine 548, cysteine 521/cysteine 533, cysteine 553/cysteine 564, cysteine 558/cysteine 574, cysteine 577/cysteine 588, cysteine 594/cysteine 610, cysteine 601/cysteine 619, cysteine 622/cysteine 646, cysteine 652/cysteine 665, cysteine 659/cysteine 678, cysteine 680/cysteine 691, cysteine 707/cysteine 715, cysteine 720/cysteine 740, cysteine 756/cysteine 776, cysteine 779/cysteine 799, cysteine 815/cysteine 835, cysteine 838/cysteine 858, cysteine 876/cysteine 896, cysteine 912/cysteine 932, and cysteine 948/cysteine 1169. The N-linked (GlcNAc...) asparagine glycan is linked to asparagine 457. In terms of domain architecture, EGF-like 1 spans 549 to 589 (PIDGCLSNPCFPGAKCNSFPDGSWSCGSCPVGFLGNGTHCE). Residue asparagine 584 is glycosylated (N-linked (GlcNAc...) asparagine). In terms of domain architecture, EGF-like 2 spans 648-692 (PENPCKDKTHSCHKNAECIYLGHFSDPMYKCECQIGYAGDGLICG). TSP type-3 repeat units follow at residues 693 to 728 (EDSD…NSGQ), 729 to 764 (EDFD…NPRQ), 765 to 787 (LDYD…NPAQ), 788 to 823 (IDTD…NTDQ), 824 to 846 (RDTD…NPDQ), 847 to 884 (IDQD…NSNQ), 885 to 920 (ADHD…NPDQ), and 921 to 956 (EDSD…AITE). Asparagine 710 carries an N-linked (GlcNAc...) asparagine glycan. Residues 727–752 (GQEDFDKDGIGDACDEDDDNDGVSDE) are disordered. Acidic residues predominate over residues 739 to 749 (ACDEDDDNDGV). The tract at residues 846 to 938 (QIDQDNDLVG…GDICKDDFDN (93 aa)) is disordered. A compositionally biased stretch (acidic residues) spans 847–866 (IDQDNDLVGDQCDNNEDIDD). Residues 870 to 884 (QNNQDNCPYISNSNQ) are compositionally biased toward polar residues. Residues 885 to 895 (ADHDNDGKGDA) are compositionally biased toward basic and acidic residues. The segment covering 896 to 905 (CDSDDDNDGV) has biased composition (acidic residues). Positions 925–935 (GDGRGDICKDD) are enriched in basic and acidic residues. The Cell attachment site motif lies at 928–930 (RGD). The 213-residue stretch at 960-1172 (RNFQMVPLDP…SDLKYECRDA (213 aa)) folds into the TSP C-terminal domain. N-linked (GlcNAc...) asparagine glycosylation is present at asparagine 1069.

It belongs to the thrombospondin family. In terms of assembly, homotrimer; disulfide-linked. Can bind to fibrinogen, fibronectin, laminin and type V collagen. Interacts (via the TSP type I repeats) with CD36; the interaction conveys an antiangiogenic effect. Interacts (via the TSP type I repeats) with HRG; the interaction blocks the antiangiogenic effect of THBS2 with CD36. Can bind to fibrinogen, fibronectin, laminin.

Functionally, adhesive glycoprotein that mediates cell-to-cell and cell-to-matrix interactions. Ligand for CD36 mediating antiangiogenic properties. This chain is Thrombospondin-2 (Thbs2), found in Mus musculus (Mouse).